We begin with the raw amino-acid sequence, 468 residues long: 3-isopropylmalate dehydratase large subunit (468 aa).

Cysteine 349, cysteine 409, and cysteine 412 together coordinate [4Fe-4S] cluster.

This sequence belongs to the aconitase/IPM isomerase family. LeuC type 1 subfamily. As to quaternary structure, heterodimer of LeuC and LeuD. The cofactor is [4Fe-4S] cluster.

It catalyses the reaction (2R,3S)-3-isopropylmalate = (2S)-2-isopropylmalate. It functions in the pathway amino-acid biosynthesis; L-leucine biosynthesis; L-leucine from 3-methyl-2-oxobutanoate: step 2/4. Catalyzes the isomerization between 2-isopropylmalate and 3-isopropylmalate, via the formation of 2-isopropylmaleate. The polypeptide is 3-isopropylmalate dehydratase large subunit (Shewanella baltica (strain OS185)).